The following is a 68-amino-acid chain: Large ribosomal subunit protein bL35 (68 aa).

The protein belongs to the bacterial ribosomal protein bL35 family.

The chain is Large ribosomal subunit protein bL35 from Orientia tsutsugamushi (strain Boryong) (Rickettsia tsutsugamushi).